The sequence spans 124 residues: Fluoride-specific ion channel FluC (124 aa).

The next 4 helical transmembrane spans lie at 4-24, 35-55, 60-80, and 100-120; these read VLYI…ISIL, FGTL…YALA, IGPE…TTFS, and LNVL…QQLI. Positions 74 and 77 each coordinate Na(+).

This sequence belongs to the fluoride channel Fluc/FEX (TC 1.A.43) family.

The protein localises to the cell inner membrane. It carries out the reaction fluoride(in) = fluoride(out). With respect to regulation, na(+) is not transported, but it plays an essential structural role and its presence is essential for fluoride channel function. Its function is as follows. Fluoride-specific ion channel. Important for reducing fluoride concentration in the cell, thus reducing its toxicity. This Shewanella amazonensis (strain ATCC BAA-1098 / SB2B) protein is Fluoride-specific ion channel FluC.